The chain runs to 317 residues: Tyrosine--tRNA ligase (317 aa).

Y32 is a binding site for L-tyrosine. A 'HIGH' region motif is present at residues P37–H45. L-tyrosine is bound by residues Y152, Q156, D159, and Q174. A 'KMSKS' region motif is present at residues K208–S212. S211 serves as a coordination point for ATP.

Belongs to the class-I aminoacyl-tRNA synthetase family. TyrS type 3 subfamily. As to quaternary structure, homodimer.

It is found in the cytoplasm. It catalyses the reaction tRNA(Tyr) + L-tyrosine + ATP = L-tyrosyl-tRNA(Tyr) + AMP + diphosphate + H(+). Its function is as follows. Catalyzes the attachment of tyrosine to tRNA(Tyr) in a two-step reaction: tyrosine is first activated by ATP to form Tyr-AMP and then transferred to the acceptor end of tRNA(Tyr). This is Tyrosine--tRNA ligase from Methanocorpusculum labreanum (strain ATCC 43576 / DSM 4855 / Z).